A 475-amino-acid chain; its full sequence is Retrotransposon Gag-like protein 3 (475 aa).

Basic and acidic residues-rich tracts occupy residues 51 to 66 (LLRKSSEAKEPQKLPE) and 78 to 87 (KTPEFKEPQK). Disordered stretches follow at residues 51–101 (LLRK…EPPA), 152–173 (EPKNSEPQDPPNIEKPQEAPEY), and 397–421 (DPNPLGKSSSAEGDGPESPPAENQP). The CCHC-type zinc-finger motif lies at 443–462 (RLCLYCGYPGHFARDCPVKP).

The protein resides in the nucleus. May function as a transcriptional regulator. Plays a role in postnatal myogenesis, may be involved in the regulation of satellite cells self-renewal. The chain is Retrotransposon Gag-like protein 3 from Homo sapiens (Human).